A 464-amino-acid polypeptide reads, in one-letter code: MFSYFRKSQQKVEENQNGGGGDGRGSGIKVELQTNINSRDLKNEHSDPKFKFSPLRSTDVHLEDYDNEKYKLKFIQIVTRHGRRTPESNRTPLTMWMCNSMDHLISNKDSPRPNCNPGQLTVLGIVDQINVGKIYRKLFIDHLGFLDSQYNKDQIFIRSTNTTRTISSARSLMHGLYGGSFTDEQEKSPHHSSFLVKPDNEENMYPRNSKKLVFLKNLIKQHPKVIKENQLSELEKFTEKINKIFENSKPEESSFRARGFRSYAGLVNSFDCFRNNGLPIPKGLTKDIIQRMYEESAKEFKSARYFPEMSILGIGRFVDDLNKELKLKARNDPSVKDLKLSLYSGHDTTLAALLVGYDMYEDKIHPVTSSTLEFLLMQDKDYKEPEVVKITKSIEKELINHQYVKVIYNHKPIHIGPCKDKEVDGMCPLSEFLKISQSIIPTNYDEQSKLTQLDKKRYLSLIED.

The tract at residues 1-29 (MFSYFRKSQQKVEENQNGGGGDGRGSGIK) is disordered. Positions 17–26 (NGGGGDGRGS) are enriched in gly residues. The active-site Nucleophile is the His81. The interval 180 to 202 (SFTDEQEKSPHHSSFLVKPDNEE) is disordered. Residue Asp347 is the Proton donor of the active site.

This sequence belongs to the histidine acid phosphatase family.

It catalyses the reaction a phosphate monoester + H2O = an alcohol + phosphate. This is Probable acid phosphatase DDB_G0284753 from Dictyostelium discoideum (Social amoeba).